The following is a 198-amino-acid chain: Nucleoid occlusion factor SlmA (198 aa).

The HTH tetR-type domain occupies 9–70; sequence RNRREEILQS…SLIEFIEDSL (62 aa). Residues 33–52 constitute a DNA-binding region (H-T-H motif); that stretch reads TTAKLAASVGVSEAALYRHF. The stretch at 117–145 forms a coiled coil; it reads EQDRLQGRINQLFERIEAQLRQVLREKKM.

This sequence belongs to the nucleoid occlusion factor SlmA family. Homodimer. Interacts with FtsZ.

Its subcellular location is the cytoplasm. It is found in the nucleoid. Functionally, required for nucleoid occlusion (NO) phenomenon, which prevents Z-ring formation and cell division over the nucleoid. Acts as a DNA-associated cell division inhibitor that binds simultaneously chromosomal DNA and FtsZ, and disrupts the assembly of FtsZ polymers. SlmA-DNA-binding sequences (SBS) are dispersed on non-Ter regions of the chromosome, preventing FtsZ polymerization at these regions. This chain is Nucleoid occlusion factor SlmA, found in Cronobacter sakazakii (strain ATCC BAA-894) (Enterobacter sakazakii).